Reading from the N-terminus, the 98-residue chain is Non-structural protein 6 (98 aa).

Belongs to the rotavirus A NSP6 family. Interacts with NSP2 and NSP5.

It localises to the host cytoplasm. It is found in the host mitochondrion. The chain is Non-structural protein 6 from Rotavirus A (isolate RVA/Human/United Kingdom/A64/1987/G10P11[14]) (RV-A).